A 162-amino-acid polypeptide reads, in one-letter code: NADH-quinone oxidoreductase subunit I (162 aa).

4Fe-4S ferredoxin-type domains lie at 52–82 and 93–122; these read LRRY…IEAG and VRYD…EGPN. [4Fe-4S] cluster contacts are provided by Cys-62, Cys-65, Cys-68, Cys-72, Cys-102, Cys-105, Cys-108, and Cys-112.

This sequence belongs to the complex I 23 kDa subunit family. In terms of assembly, NDH-1 is composed of 14 different subunits. Subunits NuoA, H, J, K, L, M, N constitute the membrane sector of the complex. It depends on [4Fe-4S] cluster as a cofactor.

The protein localises to the cell inner membrane. The enzyme catalyses a quinone + NADH + 5 H(+)(in) = a quinol + NAD(+) + 4 H(+)(out). NDH-1 shuttles electrons from NADH, via FMN and iron-sulfur (Fe-S) centers, to quinones in the respiratory chain. The immediate electron acceptor for the enzyme in this species is believed to be ubiquinone. Couples the redox reaction to proton translocation (for every two electrons transferred, four hydrogen ions are translocated across the cytoplasmic membrane), and thus conserves the redox energy in a proton gradient. The sequence is that of NADH-quinone oxidoreductase subunit I from Afipia carboxidovorans (strain ATCC 49405 / DSM 1227 / KCTC 32145 / OM5) (Oligotropha carboxidovorans).